The primary structure comprises 223 residues: Endonuclease NucS (223 aa).

Belongs to the NucS endonuclease family.

The protein resides in the cytoplasm. In terms of biological role, cleaves both 3' and 5' ssDNA extremities of branched DNA structures. The chain is Endonuclease NucS from Streptomyces coelicolor (strain ATCC BAA-471 / A3(2) / M145).